A 131-amino-acid chain; its full sequence is Small ribosomal subunit protein bS6 (131 aa).

Residues 94–131 (DAVTEESQLAKNADEKRARKATTRRPDSNDDNDNHSDD) form a disordered region. Positions 117–131 (RRPDSNDDNDNHSDD) are enriched in basic and acidic residues.

It belongs to the bacterial ribosomal protein bS6 family.

Binds together with bS18 to 16S ribosomal RNA. In Psychrobacter cryohalolentis (strain ATCC BAA-1226 / DSM 17306 / VKM B-2378 / K5), this protein is Small ribosomal subunit protein bS6.